We begin with the raw amino-acid sequence, 205 residues long: CMRF35-like molecule 2 (205 aa).

The first 17 residues, 1–17 (MWLLPALLLLCLSGCLS), serve as a signal peptide directing secretion. One can recognise an Ig-like V-type domain in the interval 18 to 120 (LKGPGSVTGT…VLDSWSRDPS (103 aa)). Residues 18–173 (LKGPGSVTGT…NSGFRLSSPH (156 aa)) lie on the Extracellular side of the membrane. Cysteine 36 and cysteine 104 form a disulfide bridge. Asparagine 154 is a glycosylation site (N-linked (GlcNAc...) asparagine). The chain crosses the membrane as a helical span at residues 174-194 (FLLVVLLKLPLLLSMLGAVFW). The Cytoplasmic segment spans residues 195–205 (VNRPQWAPPGR).

Belongs to the CD300 family. Interacts with TYROBP. N-glycosylated. In terms of tissue distribution, present on the surface of mature hematopoietic cells of the monocyte and myeloid lineages (at protein level).

The protein localises to the cell membrane. In terms of biological role, probably acts as an activating receptor. The polypeptide is CMRF35-like molecule 2 (CD300E) (Homo sapiens (Human)).